The chain runs to 86 residues: Large ribosomal subunit protein eL31 (86 aa).

It belongs to the eukaryotic ribosomal protein eL31 family.

The sequence is that of Large ribosomal subunit protein eL31 from Methanopyrus kandleri (strain AV19 / DSM 6324 / JCM 9639 / NBRC 100938).